A 239-amino-acid polypeptide reads, in one-letter code: MTSNLKYKRVLLKVSGEALMGDKQFGHDYDTIKKIAGDIKELIDSGVEVAIVVGGGNIYRGINAALVGMDRASADYIGMLATVINALTLQNVMESLNIYTRVLSAIPMMSVCEPYIRRRAKRHMEKGRVVIFAGGTGNPFCTTDSAAVLRAIEMNCDVLLKATQVDGVYDSDPKKNPNAKKYFTINYKDVITNNLQVMDLATIAIARENKLPIRVFSIKEQGNIAKVVQDQGEYTTIEE.

Residue 13–16 participates in ATP binding; that stretch reads KVSG. Glycine 55 provides a ligand contact to UMP. Glycine 56 and arginine 60 together coordinate ATP. UMP contacts are provided by residues aspartate 75 and 136-143; that span reads TGNPFCTT. 4 residues coordinate ATP: threonine 163, glutamine 164, tyrosine 169, and aspartate 172.

It belongs to the UMP kinase family. As to quaternary structure, homohexamer.

It localises to the cytoplasm. The catalysed reaction is UMP + ATP = UDP + ADP. It functions in the pathway pyrimidine metabolism; CTP biosynthesis via de novo pathway; UDP from UMP (UMPK route): step 1/1. Inhibited by UTP. In terms of biological role, catalyzes the reversible phosphorylation of UMP to UDP. This Rickettsia bellii (strain RML369-C) protein is Uridylate kinase.